The sequence spans 350 residues: Beta-ketoacyl-[acyl-carrier-protein] synthase III (350 aa).

Active-site residues include C120 and H256. Residues 257–261 (QANVR) form an ACP-binding region. The active site involves N286.

This sequence belongs to the thiolase-like superfamily. FabH family. In terms of assembly, homodimer.

The protein localises to the cytoplasm. It catalyses the reaction malonyl-[ACP] + acetyl-CoA + H(+) = 3-oxobutanoyl-[ACP] + CO2 + CoA. It functions in the pathway lipid metabolism; fatty acid biosynthesis. In terms of biological role, catalyzes the condensation reaction of fatty acid synthesis by the addition to an acyl acceptor of two carbons from malonyl-ACP. Catalyzes the first condensation reaction which initiates fatty acid synthesis and may therefore play a role in governing the total rate of fatty acid production. Possesses both acetoacetyl-ACP synthase and acetyl transacylase activities. Its substrate specificity determines the biosynthesis of branched-chain and/or straight-chain of fatty acids. The polypeptide is Beta-ketoacyl-[acyl-carrier-protein] synthase III (Deinococcus deserti (strain DSM 17065 / CIP 109153 / LMG 22923 / VCD115)).